Reading from the N-terminus, the 202-residue chain is Protein DEHYDRATION-INDUCED 19 homolog 5 (202 aa).

Residues 88-97 (SHLLKRRKPS) show a composition bias toward basic residues. Residues 88 to 120 (SHLLKRRKPSRPSSSWPTPSNNSDPYFEGPPQY) form a disordered region. The segment covering 98–112 (RPSSSWPTPSNNSDP) has biased composition (low complexity).

The protein belongs to the Di19 family.

This is Protein DEHYDRATION-INDUCED 19 homolog 5 (DI19-5) from Oryza sativa subsp. japonica (Rice).